The following is a 734-amino-acid chain: Polyphosphate kinase (734 aa).

ATP is bound at residue N67. The Mg(2+) site is built by R392 and R422. The 35-residue stretch at 447–481 (THLKTHSKIALVVKRINNELTSFVHLGTGNYNDKT) folds into the PLD phosphodiesterase domain. The Phosphohistidine intermediate role is filled by H452. Residues Y485, R581, and H609 each contribute to the ATP site. Residues 705-734 (KKQSVQPSGQPVHSRRGGSWMRKLKNTFKR) are disordered.

This sequence belongs to the polyphosphate kinase 1 (PPK1) family. Mg(2+) serves as cofactor. Post-translationally, an intermediate of this reaction is the autophosphorylated ppk in which a phosphate is covalently linked to a histidine residue through a N-P bond.

It catalyses the reaction [phosphate](n) + ATP = [phosphate](n+1) + ADP. Catalyzes the reversible transfer of the terminal phosphate of ATP to form a long-chain polyphosphate (polyP). This chain is Polyphosphate kinase, found in Staphylococcus epidermidis (strain ATCC 12228 / FDA PCI 1200).